The chain runs to 425 residues: Light-independent protochlorophyllide reductase subunit N (425 aa).

[4Fe-4S] cluster is bound by residues Cys-17, Cys-42, and Cys-103.

The protein belongs to the BchN/ChlN family. In terms of assembly, protochlorophyllide reductase is composed of three subunits; ChlL, ChlN and ChlB. Forms a heterotetramer of two ChlB and two ChlN subunits. Requires [4Fe-4S] cluster as cofactor.

The catalysed reaction is chlorophyllide a + oxidized 2[4Fe-4S]-[ferredoxin] + 2 ADP + 2 phosphate = protochlorophyllide a + reduced 2[4Fe-4S]-[ferredoxin] + 2 ATP + 2 H2O. It participates in porphyrin-containing compound metabolism; chlorophyll biosynthesis (light-independent). Its function is as follows. Component of the dark-operative protochlorophyllide reductase (DPOR) that uses Mg-ATP and reduced ferredoxin to reduce ring D of protochlorophyllide (Pchlide) to form chlorophyllide a (Chlide). This reaction is light-independent. The NB-protein (ChlN-ChlB) is the catalytic component of the complex. The protein is Light-independent protochlorophyllide reductase subunit N of Synechococcus sp. (strain CC9605).